Reading from the N-terminus, the 52-residue chain is Large ribosomal subunit protein bL32c (52 aa).

It belongs to the bacterial ribosomal protein bL32 family.

It is found in the plastid. The protein resides in the chloroplast. This chain is Large ribosomal subunit protein bL32c, found in Nymphaea alba (White water-lily).